The primary structure comprises 319 residues: Aspartate carbamoyltransferase catalytic subunit (319 aa).

Carbamoyl phosphate-binding residues include Arg-55 and Thr-56. Position 83 (Lys-83) interacts with L-aspartate. Carbamoyl phosphate is bound by residues Arg-105, His-144, and Gln-147. L-aspartate contacts are provided by Arg-177 and Arg-231. The carbamoyl phosphate site is built by Gly-272 and Pro-273.

The protein belongs to the aspartate/ornithine carbamoyltransferase superfamily. ATCase family. In terms of assembly, heterododecamer (2C3:3R2) of six catalytic PyrB chains organized as two trimers (C3), and six regulatory PyrI chains organized as three dimers (R2).

The catalysed reaction is carbamoyl phosphate + L-aspartate = N-carbamoyl-L-aspartate + phosphate + H(+). The protein operates within pyrimidine metabolism; UMP biosynthesis via de novo pathway; (S)-dihydroorotate from bicarbonate: step 2/3. Its function is as follows. Catalyzes the condensation of carbamoyl phosphate and aspartate to form carbamoyl aspartate and inorganic phosphate, the committed step in the de novo pyrimidine nucleotide biosynthesis pathway. The protein is Aspartate carbamoyltransferase catalytic subunit of Nocardia farcinica (strain IFM 10152).